Consider the following 397-residue polypeptide: Putative protein FAM47D (397 aa).

Belongs to the FAM47 family.

The sequence is that of Putative protein FAM47D (FAM47DP) from Homo sapiens (Human).